The sequence spans 64 residues: UPF0370 protein YE1145 (64 aa).

The helical transmembrane segment at 3–23 threads the bilayer; that stretch reads WLADYWWVVLIILVGMILNGI. The disordered stretch occupies residues 36-64; the sequence is SNKPEIPPHRDNNAQWDDDDDWPDKDKKK.

The protein belongs to the UPF0370 family.

The protein resides in the cell membrane. In Yersinia enterocolitica serotype O:8 / biotype 1B (strain NCTC 13174 / 8081), this protein is UPF0370 protein YE1145.